Reading from the N-terminus, the 956-residue chain is Zinc fingers and homeoboxes protein 3 (956 aa).

Positions 1-107 (MASKRKSTTP…SEHTDFNKDP (107 aa)) are required for nuclear localization. The interval 22-66 (DASMEAQPAETLPEGPQQDLPPEASAASSEAAQNPSSTDGSTLAN) is disordered. Low complexity predominate over residues 42-58 (PPEASAASSEAAQNPSS). 2 consecutive C2H2-type zinc fingers follow at residues 77 to 100 (YSCKYCDFRSHDMTQFVGHMNSEH) and 109 to 132 (FVCSGCSFLAKTPEGLSLHNATCH). The tract at residues 242-488 (ASASSAKNPH…LLTACPSITS (247 aa)) is required for homodimerization and interaction with NFYA. The segment at 303 to 502 (LSSIPTYNAA…DASIYKNKKS (200 aa)) is required for repressor activity. 2 consecutive DNA-binding regions (homeobox) follow at residues 304–363 (SSIP…GISW) and 494–553 (ASIY…RNLK). Positions 497–555 (YKNKKSHEQLSALKGSFCRNQFPGQSEVEHLTKVTGLSTREVRKWFSDRRYHCRNLKGS) are required for nuclear localization. Disordered stretches follow at residues 598 to 618 (PSAKRQSWHQTPDFTPTKYKE) and 666 to 695 (KVNAEETKKAEENASQEEEEAAEDEGGEED). Residues serine 599 and serine 604 each carry the phosphoserine modification. Residues 612 to 671 (TPTKYKERAPEQLRALESSFAQNPLPLDEELDRLRSETKMTRREIDSWFSERRKKVNAEE) constitute a DNA-binding region (homeobox 3). Basic and acidic residues predominate over residues 666–677 (KVNAEETKKAEE). The segment covering 679 to 695 (ASQEEEEAAEDEGGEED) has biased composition (acidic residues). Residues serine 680, serine 708, and serine 723 each carry the phosphoserine modification. DNA-binding regions (homeobox) lie at residues 764-823 (PGKV…KNGQ) and 835-894 (FPPG…TRAV). The segment at 890 to 956 (ETRAVADTGS…PQAGRQLETD (67 aa)) is disordered. Phosphoserine occurs at positions 927 and 946.

The protein belongs to the ZHX family. As to quaternary structure, homodimer (via homeobox domain 1). Heterodimer with ZHX1 (via homeobox domain 1). Heterodimer with ZHX2 (via homeobox domain 1). Heterodimerization with ZHX1 is a prerequisite for repressor activity. Interacts with NFYA. In terms of tissue distribution, widely expressed. High expression in kidney. Expressed during osteogenic differentiation.

The protein localises to the nucleus. In terms of biological role, acts as a transcriptional repressor. Involved in the early stages of mesenchymal stem cell (MSC) osteogenic differentiation. Is a regulator of podocyte gene expression during primary glomerula disease. Binds to promoter DNA. This chain is Zinc fingers and homeoboxes protein 3 (ZHX3), found in Homo sapiens (Human).